The primary structure comprises 392 residues: O-phospho-L-seryl-tRNA:Cys-tRNA synthase 2 (392 aa).

Pyridoxal 5'-phosphate-binding positions include 85–86, Asn190, and 213–215; these read AR and SGH. Lys216 is modified (N6-(pyridoxal phosphate)lysine).

It belongs to the SepCysS family. In terms of assembly, homodimer. Interacts with SepRS. Requires pyridoxal 5'-phosphate as cofactor.

The enzyme catalyses O-phospho-L-seryl-tRNA(Cys) + hydrogen sulfide + H(+) = L-cysteinyl-tRNA(Cys) + phosphate. Its function is as follows. Converts O-phospho-L-seryl-tRNA(Cys) (Sep-tRNA(Cys)) to L-cysteinyl-tRNA(Cys) (Cys-tRNA(Cys)). This Methanocorpusculum labreanum (strain ATCC 43576 / DSM 4855 / Z) protein is O-phospho-L-seryl-tRNA:Cys-tRNA synthase 2.